The chain runs to 558 residues: SPATS2-like protein (558 aa).

Ala2 carries the post-translational modification N-acetylalanine. Residues 63–79 are compositionally biased toward basic residues; sequence GKKKNNKRKRSKSKQHQ. 2 disordered regions span residues 63–134 and 157–201; these read GKKK…EKKI and KLSL…KSNT. Basic and acidic residues predominate over residues 80-92; sequence GNKDAKDKVERPE. Position 120 is a phosphoserine (Ser120). The stretch at 271–344 forms a coiled coil; that stretch reads LMAEMDKVKE…ARFSCDIEQL (74 aa). Positions 380–525 are disordered; the sequence is TSGKQSNFSR…DTSEARPFRG (146 aa). Polar residues-rich tracts occupy residues 381 to 390, 410 to 432, and 440 to 456; these read SGKQSNFSRK, SLPS…GSSN, and QYHN…QGSG. Phosphoserine is present on Ser455. Over residues 469–485 the composition is skewed to basic residues; the sequence is HEHRRQPHNGFRPKNKG. Over residues 513 to 522 the composition is skewed to basic and acidic residues; that stretch reads HAADTSEARP.

Belongs to the SPATS2 family.

It is found in the cytoplasm. It localises to the nucleus. The protein localises to the nucleolus. The protein is SPATS2-like protein (SPATS2L) of Homo sapiens (Human).